The sequence spans 193 residues: Protein PapJ (193 aa).

The N-terminal stretch at 1-27 is a signal peptide; the sequence is MVVNKTTAVLYLIALSLSGFIHTFLRA.

It localises to the periplasm. This protein maintains pilus integrity and thus is an important participant in pilus assembly. It may function as molecular chaperone directly or indirectly in the correct assembly of PapA subunits. The polypeptide is Protein PapJ (papJ) (Escherichia coli).